The sequence spans 239 residues: Probable transcriptional regulatory protein BBR47_14810 (239 aa).

Belongs to the TACO1 family. YeeN subfamily.

The protein resides in the cytoplasm. In Brevibacillus brevis (strain 47 / JCM 6285 / NBRC 100599), this protein is Probable transcriptional regulatory protein BBR47_14810.